A 266-amino-acid chain; its full sequence is Integral membrane protein 2B (266 aa).

Over 1 to 54 the chain is Cytoplasmic; sequence MVKVTFNSALAQKEAKKDESKSGEEALIIPPDAVAVDCKDPDEVVPVGQRRAWC. Residues 55–75 form a helical; Signal-anchor for type II membrane protein membrane-spanning segment; sequence WCMCFGLAFMLAGVILGGAYL. Topologically, residues 76-266 are lumenal; the sequence is YKYFAFQPDD…RFAVETLICP (191 aa). The necessary for interaction with APP and inhibitor effects on APP processing stretch occupies residues 102–134; sequence EPSADAPASRYQTIEENIKIFEEDEVEFISVPV. In terms of domain architecture, BRICHOS spans 137-231; the sequence is FADSDPANIV…LCHDKETYKL (95 aa). 2 disulfide bridges follow: Cys164–Cys223 and Cys248–Cys265. Asn170 carries N-linked (GlcNAc...) asparagine glycosylation.

It belongs to the ITM2 family. In terms of assembly, homodimer; disulfide-linked. Interacts with SPPL2A and SPPL2B. Interacts with APP. Mature BRI2 (mBRI2) interacts with the APP amyloid-beta A4 protein; the interaction occurs at the cell surface and in the endocytic compartments and enable alpha- and beta-secretase-induced APP cleavage inhibition. Mature BRI2 (mBRI2) interacts with the APP C99; the interaction occurs in the endocytic compartments and enable gamma-secretase-induced C99 cleavage inhibition. May form heterodimers with Bri23 peptide and APP amyloid-beta protein 40. Interacts with ADAM7 in sperm; the interaction increases following capacitation. The ectodomain C-terminal part of the imBRI2 is processed by furin producing a secreted Bri23 peptide and a mature BRI2, membrane form (mBRI2). The remaining part of the ectodomain of mBRI2 containing the BRICHOS domain is cleaved by ADAM10 and is secreted (BRI2C, soluble form). The membrane-bound N-terminal fragment (BRI2C, membrane form) is further proteolytically processed by SPPL2A and SPPL2B through regulated intramembrane proteolysis producing a secreted C-peptide and a BRI2 intracellular domain (BRI2 ICD) released in the cytosol. Shedding by ADAM10 facilitates intramembrane cleavage but is not absolutely required for BRI2 ICD generation. In terms of processing, glycosylation at Asn-170 is important for cell surface localization, but doesn't affect furin- and ADAM10-induced proteolytic processing.

The protein resides in the golgi apparatus membrane. Its subcellular location is the cell membrane. The protein localises to the endosome membrane. It localises to the secreted. In terms of biological role, plays a regulatory role in the processing of the amyloid-beta A4 precursor protein (APP) and acts as an inhibitor of the amyloid-beta peptide aggregation and fibrils deposition. Plays a role in the induction of neurite outgrowth. Functions as a protease inhibitor by blocking access of secretases to APP cleavage sites. Its function is as follows. Mature BRI2 (mBRI2) functions as a modulator of the amyloid-beta A4 precursor protein (APP) processing leading to a strong reduction in the secretion of secretase-processed amyloid-beta protein 40 and amyloid-beta protein 42. Bri23 peptide prevents aggregation of APP amyloid-beta protein 42 into toxic oligomers. In Bos taurus (Bovine), this protein is Integral membrane protein 2B (ITM2B).